Reading from the N-terminus, the 203-residue chain is Na(+)-translocating NADH-quinone reductase subunit E (203 aa).

6 consecutive transmembrane segments (helical) span residues 11–31 (SIFI…FLAV), 35–55 (ISTA…TVPL), 82–102 (FLGL…LEMF), 115–135 (GIFL…LFMV), 145–165 (MVYG…MAGV), and 181–201 (LGIT…FSGI).

It belongs to the NqrDE/RnfAE family. Composed of six subunits; NqrA, NqrB, NqrC, NqrD, NqrE and NqrF.

The protein localises to the cell inner membrane. It carries out the reaction a ubiquinone + n Na(+)(in) + NADH + H(+) = a ubiquinol + n Na(+)(out) + NAD(+). In terms of biological role, NQR complex catalyzes the reduction of ubiquinone-1 to ubiquinol by two successive reactions, coupled with the transport of Na(+) ions from the cytoplasm to the periplasm. NqrA to NqrE are probably involved in the second step, the conversion of ubisemiquinone to ubiquinol. The chain is Na(+)-translocating NADH-quinone reductase subunit E from Dichelobacter nodosus (strain VCS1703A).